The following is a 154-amino-acid chain: Probable deoxyuridine 5'-triphosphate nucleotidohydrolase (154 aa).

The protein belongs to the dCTP deaminase family. Archaeal dUTPase subfamily.

The enzyme catalyses dUTP + H2O = dUMP + diphosphate + H(+). The protein operates within pyrimidine metabolism; dUMP biosynthesis; dUMP from dCTP (dUTP route): step 2/2. This enzyme is involved in nucleotide metabolism: it produces dUMP, the immediate precursor of thymidine nucleotides and it decreases the intracellular concentration of dUTP so that uracil cannot be incorporated into DNA. This is Probable deoxyuridine 5'-triphosphate nucleotidohydrolase from Methanopyrus kandleri (strain AV19 / DSM 6324 / JCM 9639 / NBRC 100938).